The primary structure comprises 273 residues: Undecaprenyl-diphosphatase (273 aa).

7 helical membrane-spanning segments follow: residues 6-26, 45-65, 90-110, 116-136, 190-210, 222-242, and 252-272; these read SLLI…LPVS, AKTF…VMFW, LTLI…LLFH, LFNP…LIAA, YAAS…ATAL, GDIP…LIAI, and ISFI…YVVF.

The protein belongs to the UppP family.

It is found in the cell inner membrane. It carries out the reaction di-trans,octa-cis-undecaprenyl diphosphate + H2O = di-trans,octa-cis-undecaprenyl phosphate + phosphate + H(+). Its function is as follows. Catalyzes the dephosphorylation of undecaprenyl diphosphate (UPP). Confers resistance to bacitracin. The polypeptide is Undecaprenyl-diphosphatase (Escherichia coli O157:H7).